Reading from the N-terminus, the 297-residue chain is D-alanine--D-alanine ligase (297 aa).

The 191-residue stretch at 103 to 293 (KEILMHHRMP…FDSFVKSILE (191 aa)) folds into the ATP-grasp domain. An ATP-binding site is contributed by 129–180 (ISFPVAVKPSSGGSSIATFKVKSLEELENAYQQASKHGEVMIEQWVTGKEIT). Residues Asp-247, Glu-260, and Asn-262 each coordinate Mg(2+).

Belongs to the D-alanine--D-alanine ligase family. Mg(2+) serves as cofactor. It depends on Mn(2+) as a cofactor.

It localises to the cytoplasm. The enzyme catalyses 2 D-alanine + ATP = D-alanyl-D-alanine + ADP + phosphate + H(+). The protein operates within cell wall biogenesis; peptidoglycan biosynthesis. Its function is as follows. Cell wall formation. The sequence is that of D-alanine--D-alanine ligase from Francisella philomiragia subsp. philomiragia (strain ATCC 25017 / CCUG 19701 / FSC 153 / O#319-036).